Consider the following 251-residue polypeptide: Zinc import ATP-binding protein ZnuC (251 aa).

An ABC transporter domain is found at 5–220 (VSLENVSVSF…PEFISMFGPR (216 aa)). ATP is bound at residue 37–44 (GPNGAGKS).

Belongs to the ABC transporter superfamily. Zinc importer (TC 3.A.1.15.5) family. As to quaternary structure, the complex is composed of two ATP-binding proteins (ZnuC), two transmembrane proteins (ZnuB) and a solute-binding protein (ZnuA).

It is found in the cell inner membrane. It carries out the reaction Zn(2+)(out) + ATP(in) + H2O(in) = Zn(2+)(in) + ADP(in) + phosphate(in) + H(+)(in). In terms of biological role, part of the ABC transporter complex ZnuABC involved in zinc import. Responsible for energy coupling to the transport system. The chain is Zinc import ATP-binding protein ZnuC from Escherichia coli O157:H7.